Consider the following 504-residue polypeptide: Cytochrome P450 3A1 (504 aa).

Cys-443 provides a ligand contact to heme.

Belongs to the cytochrome P450 family. The cofactor is heme.

It localises to the endoplasmic reticulum membrane. The protein resides in the microsome membrane. It catalyses the reaction an organic molecule + reduced [NADPH--hemoprotein reductase] + O2 = an alcohol + oxidized [NADPH--hemoprotein reductase] + H2O + H(+). In terms of biological role, cytochromes P450 are a group of heme-thiolate monooxygenases. In liver microsomes, this enzyme is involved in an NADPH-dependent electron transport pathway. It oxidizes a variety of structurally unrelated compounds, including steroids, fatty acids, and xenobiotics. This is Cytochrome P450 3A1 (Cyp3a1) from Rattus norvegicus (Rat).